Reading from the N-terminus, the 71-residue chain is MKTKVVMCSGLFCSVFAGAFMLNQYDGRSGVAACDEWELYLLEHHLSARMSETESKDLPFGPREYIRIVNK.

Residues 5-22 traverse the membrane as a helical segment; that stretch reads VVMCSGLFCSVFAGAFML.

It is found in the membrane. This is an uncharacterized protein from Bacillus subtilis (strain 168).